The primary structure comprises 478 residues: D(1B) dopamine receptor (478 aa).

Over 1–38 (MLPPGRNGTAHRARLGLQRQLAQVDAPGGSAAPLGPAQ) the chain is Extracellular. Asn-7 carries N-linked (GlcNAc...) asparagine glycosylation. The helical transmembrane segment at 39–64 (VVTAGLLTLLIVWTLLGNVLVCAAIV) threads the bilayer. Residues 65 to 75 (RSRHLRAKMTN) are Cytoplasmic-facing. Residues 76–102 (IFIVSLAVSDLFVALLVMPWKAVAEVA) form a helical membrane-spanning segment. The Extracellular segment spans residues 103-111 (GYWPFGAFC). Residues Cys-111 and Cys-211 are joined by a disulfide bond. Residues 112–134 (DIWVAFDIMCSTASILNLCIISV) traverse the membrane as a helical segment. Residues 135 to 153 (DRYWAISRPFRYERKMTQR) lie on the Cytoplasmic side of the membrane. A helical transmembrane segment spans residues 154–179 (VALVMVALAWTLSILISFIPVQLNWH). The Extracellular portion of the chain corresponds to 180-215 (RDKAGSQGREGLLSNETPWEEGWELDGRTENCDSSL). A helical transmembrane segment spans residues 216–240 (NRTYAISSSLISFYIPVAIMIVTYT). Residues 241–289 (RIYRIAQVQIRRISSLERAAEHAQSCRSRGACEPDPSLRASIKKETKVF) are Cytoplasmic-facing. Residues 290 to 317 (KTLSVIMGVFVCCWLPFFILNCMVPFCS) traverse the membrane as a helical segment. The Extracellular portion of the chain corresponds to 318–335 (SGDAQGPRTGFPCVSETT). The chain crosses the membrane as a helical span at residues 336 to 357 (FDIFVWFGWANSSLNPIIYAFN). Residues 358 to 478 (ADFRKVFAQL…LTPNCFHKTA (121 aa)) are Cytoplasmic-facing. A lipid anchor (S-palmitoyl cysteine) is attached at Cys-370. Residues 416–446 (GDREVGEEEEAEEEGPFDHMSQISPTTPDGD) form a disordered region. Over residues 420 to 430 (VGEEEEAEEEG) the composition is skewed to acidic residues.

It belongs to the G-protein coupled receptor 1 family.

Its subcellular location is the cell membrane. Dopamine receptor whose activity is mediated by G proteins which activate adenylyl cyclase. This is D(1B) dopamine receptor (Drd5) from Mus musculus (Mouse).